The following is a 580-amino-acid chain: Peptidyl-prolyl cis-trans isomerase-like 2 (580 aa).

In terms of domain architecture, U-box spans 42–115 (KRLPFRFCSL…GEYIDPVTYK (74 aa)). 5 disordered regions span residues 182–201 (IKEGESGLSDEQLREREDPS), 227–259 (QERAQKAGNAASTPVAKTDAPVKSAQKTASYQS), 439–459 (SPTLNKLETHPVNPTTNRPTP), 479–530 (QKKQ…SSTT), and 553–580 (FVDEEPTSEPAKKKFKGIGGFGDFSSWD). Residues 309-468 (QKGYARISTT…PDIRIVDVTI (160 aa)) enclose the PPIase cyclophilin-type domain. Over residues 439 to 457 (SPTLNKLETHPVNPTTNRP) the composition is skewed to polar residues. The span at 490–507 (EANRTAENDEEGSRRAED) shows a compositional bias: basic and acidic residues.

The protein belongs to the cyclophilin-type PPIase family. PPIL2 subfamily.

The protein localises to the nucleus. The catalysed reaction is [protein]-peptidylproline (omega=180) = [protein]-peptidylproline (omega=0). It carries out the reaction S-ubiquitinyl-[E2 ubiquitin-conjugating enzyme]-L-cysteine + [acceptor protein]-L-lysine = [E2 ubiquitin-conjugating enzyme]-L-cysteine + N(6)-ubiquitinyl-[acceptor protein]-L-lysine.. Its pathway is protein modification; protein ubiquitination. Its function is as follows. May catalyze the cis-trans isomerization of proline imidic peptide bonds in oligopeptides thereby assisting the folding of proteins. May also function as a chaperone, playing a role in intracellular transport of proteins. May also have a protein ubiquitin ligase activity acting as an E3 ubiquitin protein ligase or as a ubiquitin-ubiquitin ligase promoting elongation of ubiquitin chains on proteins. This is Peptidyl-prolyl cis-trans isomerase-like 2 (cyp8) from Emericella nidulans (strain FGSC A4 / ATCC 38163 / CBS 112.46 / NRRL 194 / M139) (Aspergillus nidulans).